The sequence spans 314 residues: UDP-N-acetylenolpyruvoylglucosamine reductase (314 aa).

The FAD-binding PCMH-type domain occupies 27–192 (KIGGKARYIV…LRAVFCLKFA (166 aa)). The active site involves R171. Residue S223 is the Proton donor of the active site. Residue E293 is part of the active site.

Belongs to the MurB family. FAD is required as a cofactor.

Its subcellular location is the cytoplasm. It carries out the reaction UDP-N-acetyl-alpha-D-muramate + NADP(+) = UDP-N-acetyl-3-O-(1-carboxyvinyl)-alpha-D-glucosamine + NADPH + H(+). Its pathway is cell wall biogenesis; peptidoglycan biosynthesis. In terms of biological role, cell wall formation. This Caldicellulosiruptor bescii (strain ATCC BAA-1888 / DSM 6725 / KCTC 15123 / Z-1320) (Anaerocellum thermophilum) protein is UDP-N-acetylenolpyruvoylglucosamine reductase.